The following is a 156-amino-acid chain: Small ribosomal subunit protein uS7 (156 aa).

The protein belongs to the universal ribosomal protein uS7 family. In terms of assembly, part of the 30S ribosomal subunit. Contacts proteins S9 and S11.

One of the primary rRNA binding proteins, it binds directly to 16S rRNA where it nucleates assembly of the head domain of the 30S subunit. Is located at the subunit interface close to the decoding center, probably blocks exit of the E-site tRNA. The protein is Small ribosomal subunit protein uS7 of Chromobacterium violaceum (strain ATCC 12472 / DSM 30191 / JCM 1249 / CCUG 213 / NBRC 12614 / NCIMB 9131 / NCTC 9757 / MK).